The primary structure comprises 633 residues: Chaperone protein DnaK (633 aa).

Thr198 carries the phosphothreonine; by autocatalysis modification. The interval 599-633 (QQASQETPGDGDAGAAGAKKKDDDDVVDADYEEVK) is disordered. A compositionally biased stretch (acidic residues) spans 622 to 633 (DDVVDADYEEVK).

It belongs to the heat shock protein 70 family.

In terms of biological role, acts as a chaperone. The sequence is that of Chaperone protein DnaK from Desulfotalea psychrophila (strain LSv54 / DSM 12343).